A 240-amino-acid polypeptide reads, in one-letter code: 3-deoxy-D-manno-octulosonic acid kinase (240 aa).

The active site involves Asp170.

Belongs to the protein kinase superfamily. KdkA/RfaP family.

It localises to the cell inner membrane. The enzyme catalyses an alpha-Kdo-(2-&gt;6)-lipid IVA + ATP = a 4-O-phospho-alpha-Kdo-(2-&gt;6)-lipid IVA + ADP + H(+). The protein operates within bacterial outer membrane biogenesis; LPS core biosynthesis. In terms of biological role, catalyzes the ATP-dependent phosphorylation of the 3-deoxy-D-manno-octulosonic acid (Kdo) residue in Kdo-lipid IV(A) at the 4-OH position. In Actinobacillus succinogenes (strain ATCC 55618 / DSM 22257 / CCUG 43843 / 130Z), this protein is 3-deoxy-D-manno-octulosonic acid kinase.